The following is a 203-amino-acid chain: bMERB domain-containing protein 1 (203 aa).

Residues 3-149 (LKQSLSVHLE…EQEEDKEMAD (147 aa)) enclose the bMERB domain. Residues 161 to 184 (VTKTSASSRAEKKAEPPPSKPTVA) are disordered.

This Mus musculus (Mouse) protein is bMERB domain-containing protein 1 (Bmerb1).